The following is a 289-amino-acid chain: Polyisoprenoid diphosphate/phosphate phosphohydrolase PLPP6 (289 aa).

The interval 1 to 81 is disordered; the sequence is MQSPRRNAEG…SSQALPPQLP (81 aa). Residues 1–126 lie on the Cytoplasmic side of the membrane; that stretch reads MQSPRRNAEG…ESSSWGSMRP (126 aa). 3 positions are modified to phosphoserine: S23, S30, and S64. A helical transmembrane segment spans residues 127-147; that stretch reads LMKLLEISGHGIPWLLGTLYC. The Lumenal segment spans residues 148 to 158; it reads LSRSDSWAGRE. The chain crosses the membrane as a helical span at residues 159 to 179; that stretch reads VLMNLLFALLLDLLLVSLIKG. The segment at 178–186 is phosphatase sequence motif I; the sequence is KGLVRRRRP. Residues 180 to 222 lie on the Cytoplasmic side of the membrane; sequence LVRRRRPAHNQMDMFFTISVDKYSFPSGHTTRAALVSRFILNH. The segment at 205–208 is phosphatase sequence motif II; the sequence is PSGH. H208 serves as the catalytic Proton donors. The helical transmembrane segment at 223–243 threads the bilayer; the sequence is LVLAIPLRVLVVLWAFILGLS. The tract at residues 243 to 254 is phosphatase sequence motif III; the sequence is SRVMLGRHNVTD. Over 244–254 the chain is Lumenal; that stretch reads RVMLGRHNVTD. Catalysis depends on H250, which acts as the Nucleophile. A helical membrane pass occupies residues 255–275; that stretch reads VAFGFFLGYMQYSIVDYCWLS. At 276-289 the chain is on the cytoplasmic side; sequence PRTAPVLFVLWNQP.

This sequence belongs to the PA-phosphatase related phosphoesterase family. Phosphorylation by PKC activates the phosphatase activity towards presqualene diphosphate.

Its subcellular location is the endoplasmic reticulum membrane. It localises to the nucleus envelope. The protein resides in the nucleus inner membrane. It catalyses the reaction presqualene diphosphate + H2O = presqualene phosphate + phosphate + H(+). The enzyme catalyses presqualene phosphate + H2O = presqualene alcohol + phosphate. The catalysed reaction is (2E,6E)-farnesyl diphosphate + H2O = (2E,6E)-farnesyl phosphate + phosphate + H(+). It carries out the reaction (2E,6E)-farnesyl phosphate + H2O = (2E,6E)-farnesol + phosphate. It catalyses the reaction (2E,6E,10E)-geranylgeranyl diphosphate + H2O = (2E,6E,10E)-geranylgeranyl phosphate + phosphate + H(+). The enzyme catalyses (2E,6E,10E)-geranylgeranyl phosphate + H2O = (2E,6E,10E)-geranylgeraniol + phosphate. The catalysed reaction is (2E)-geranyl diphosphate + H2O = (2E)-geranyl phosphate + phosphate + H(+). It carries out the reaction (2E)-geranyl phosphate + H2O = (2E)-geraniol + phosphate. It catalyses the reaction 1,2-dihexadecanoyl-sn-glycero-3-phosphate + H2O = 1,2-dihexadecanoyl-sn-glycerol + phosphate. Functionally, magnesium-independent polyisoprenoid diphosphatase that catalyzes the sequential dephosphorylation of presqualene, farnesyl, geranyl and geranylgeranyl diphosphates. Functions in the innate immune response through the dephosphorylation of presqualene diphosphate which acts as a potent inhibitor of the signaling pathways contributing to polymorphonuclear neutrophils activation. May regulate the biosynthesis of cholesterol and related sterols by dephosphorylating presqualene and farnesyl diphosphate, two key intermediates in this biosynthetic pathway. May also play a role in protein prenylation by acting on farnesyl diphosphate and its derivative geranylgeranyl diphosphate, two precursors for the addition of isoprenoid anchors to membrane proteins. Has a lower activity towards phosphatidic acid (PA), but through phosphatidic acid dephosphorylation may participate in the biosynthesis of phospholipids and triacylglycerols. May also act on ceramide-1-P, lysophosphatidic acid (LPA) and sphing-4-enine 1-phosphate/sphingosine-1-phosphate. The chain is Polyisoprenoid diphosphate/phosphate phosphohydrolase PLPP6 from Bos taurus (Bovine).